The sequence spans 156 residues: 6,7-dimethyl-8-ribityllumazine synthase (156 aa).

5-amino-6-(D-ribitylamino)uracil is bound by residues phenylalanine 22, 57–59 (AYE), and 81–83 (TVI). (2S)-2-hydroxy-3-oxobutyl phosphate is bound at residue 86–87 (GT). Histidine 89 functions as the Proton donor in the catalytic mechanism. Phenylalanine 114 contacts 5-amino-6-(D-ribitylamino)uracil. Arginine 128 provides a ligand contact to (2S)-2-hydroxy-3-oxobutyl phosphate.

The protein belongs to the DMRL synthase family. Forms an icosahedral capsid composed of 60 subunits, arranged as a dodecamer of pentamers.

It carries out the reaction (2S)-2-hydroxy-3-oxobutyl phosphate + 5-amino-6-(D-ribitylamino)uracil = 6,7-dimethyl-8-(1-D-ribityl)lumazine + phosphate + 2 H2O + H(+). The protein operates within cofactor biosynthesis; riboflavin biosynthesis; riboflavin from 2-hydroxy-3-oxobutyl phosphate and 5-amino-6-(D-ribitylamino)uracil: step 1/2. Catalyzes the formation of 6,7-dimethyl-8-ribityllumazine by condensation of 5-amino-6-(D-ribitylamino)uracil with 3,4-dihydroxy-2-butanone 4-phosphate. This is the penultimate step in the biosynthesis of riboflavin. The polypeptide is 6,7-dimethyl-8-ribityllumazine synthase (Citrobacter koseri (strain ATCC BAA-895 / CDC 4225-83 / SGSC4696)).